The chain runs to 144 residues: Glutamyl-tRNA(Gln) amidotransferase subunit C, mitochondrial (144 aa).

The transit peptide at 1 to 17 directs the protein to the mitochondrion; sequence MFRRSVSFVRSHVLRSF.

This sequence belongs to the GatC family. In terms of assembly, subunit of the heterotrimeric GatCAB amidotransferase (AdT) complex, composed of A, B and C subunits.

The protein resides in the mitochondrion. It carries out the reaction L-glutamyl-tRNA(Gln) + L-glutamine + ATP + H2O = L-glutaminyl-tRNA(Gln) + L-glutamate + ADP + phosphate + H(+). Functionally, allows the formation of correctly charged Gln-tRNA(Gln) through the transamidation of misacylated Glu-tRNA(Gln) in the mitochondria. The reaction takes place in the presence of glutamine and ATP through an activated gamma-phospho-Glu-tRNA(Gln). This Ixodes scapularis (Black-legged tick) protein is Glutamyl-tRNA(Gln) amidotransferase subunit C, mitochondrial.